Here is a 140-residue protein sequence, read N- to C-terminus: ATP synthase epsilon chain (140 aa).

It belongs to the ATPase epsilon chain family. In terms of assembly, F-type ATPases have 2 components, CF(1) - the catalytic core - and CF(0) - the membrane proton channel. CF(1) has five subunits: alpha(3), beta(3), gamma(1), delta(1), epsilon(1). CF(0) has three main subunits: a, b and c.

It localises to the cell inner membrane. Produces ATP from ADP in the presence of a proton gradient across the membrane. The chain is ATP synthase epsilon chain (atpC) from Vibrio alginolyticus.